The primary structure comprises 349 residues: Glycerol-3-phosphate dehydrogenase [NAD(P)+] (349 aa).

Residues Ser-12, Trp-13, and Lys-107 each coordinate NADPH. Sn-glycerol 3-phosphate contacts are provided by Lys-107, Gly-138, and Ser-140. NADPH is bound at residue Ala-142. Sn-glycerol 3-phosphate-binding residues include Lys-193, Asp-246, Ser-256, Arg-257, and Asn-258. The Proton acceptor role is filled by Lys-193. NADPH is bound at residue Arg-257. NADPH contacts are provided by Val-281 and Glu-283.

It belongs to the NAD-dependent glycerol-3-phosphate dehydrogenase family.

It is found in the cytoplasm. It carries out the reaction sn-glycerol 3-phosphate + NAD(+) = dihydroxyacetone phosphate + NADH + H(+). The catalysed reaction is sn-glycerol 3-phosphate + NADP(+) = dihydroxyacetone phosphate + NADPH + H(+). It functions in the pathway membrane lipid metabolism; glycerophospholipid metabolism. Functionally, catalyzes the reduction of the glycolytic intermediate dihydroxyacetone phosphate (DHAP) to sn-glycerol 3-phosphate (G3P), the key precursor for phospholipid synthesis. This chain is Glycerol-3-phosphate dehydrogenase [NAD(P)+], found in Pelotomaculum thermopropionicum (strain DSM 13744 / JCM 10971 / SI).